The sequence spans 241 residues: MSDKNPRYSRILLKLSGEALAGTKDMGIDTEVLDKMSLSIAHLRGLGVQVGIVVGGGNLYRGAQLQKEGLVGRVTGDQMGMLATVMNGLAMRDALERRNIKTRLMSALPIGEVTESYSSRNAIRYLKNGEVCIFVAGTGNPFFTTDTAACLRGIEIEAGLILKATKVDGVYDKDPSLHSDAVKYDGLTFDEVLEQKLGVMDLTAIALCREHDVPLQVFDMNKPNALLNVVMGENEGTRVYH.

Residue 14 to 17 (KLSG) coordinates ATP. Position 56 (glycine 56) interacts with UMP. ATP-binding residues include glycine 57 and arginine 61. UMP contacts are provided by residues aspartate 77 and 138–145 (TGNPFFTT). The ATP site is built by threonine 165, tyrosine 171, and aspartate 174.

Belongs to the UMP kinase family. As to quaternary structure, homohexamer.

The protein localises to the cytoplasm. The catalysed reaction is UMP + ATP = UDP + ADP. The protein operates within pyrimidine metabolism; CTP biosynthesis via de novo pathway; UDP from UMP (UMPK route): step 1/1. Inhibited by UTP. Catalyzes the reversible phosphorylation of UMP to UDP. In Psychrobacter cryohalolentis (strain ATCC BAA-1226 / DSM 17306 / VKM B-2378 / K5), this protein is Uridylate kinase.